The following is a 153-amino-acid chain: SsrA-binding protein (153 aa).

The interval Lys-129–His-153 is disordered.

It belongs to the SmpB family.

Its subcellular location is the cytoplasm. In terms of biological role, required for rescue of stalled ribosomes mediated by trans-translation. Binds to transfer-messenger RNA (tmRNA), required for stable association of tmRNA with ribosomes. tmRNA and SmpB together mimic tRNA shape, replacing the anticodon stem-loop with SmpB. tmRNA is encoded by the ssrA gene; the 2 termini fold to resemble tRNA(Ala) and it encodes a 'tag peptide', a short internal open reading frame. During trans-translation Ala-aminoacylated tmRNA acts like a tRNA, entering the A-site of stalled ribosomes, displacing the stalled mRNA. The ribosome then switches to translate the ORF on the tmRNA; the nascent peptide is terminated with the 'tag peptide' encoded by the tmRNA and targeted for degradation. The ribosome is freed to recommence translation, which seems to be the essential function of trans-translation. This Geobacter sulfurreducens (strain ATCC 51573 / DSM 12127 / PCA) protein is SsrA-binding protein.